Reading from the N-terminus, the 63-residue chain is MKQSEIKDLSAAELQEKLSQTKKVYADLKMAHAISPIANPLRIRSVRRTVARLATELTKRELQ.

It belongs to the universal ribosomal protein uL29 family.

The polypeptide is Large ribosomal subunit protein uL29 (Flavobacterium johnsoniae (strain ATCC 17061 / DSM 2064 / JCM 8514 / BCRC 14874 / CCUG 350202 / NBRC 14942 / NCIMB 11054 / UW101) (Cytophaga johnsonae)).